A 550-amino-acid polypeptide reads, in one-letter code: Glutamyl-tRNA(Gln) amidotransferase subunit A, mitochondrial (550 aa).

Active-site charge relay system residues include Lys-79 and Ser-171. Ser-195 serves as the catalytic Acyl-ester intermediate. A disordered region spans residues Glu-371–Asn-390.

It belongs to the amidase family. GatA subfamily. In terms of assembly, subunit of the heterotrimeric GatCAB amidotransferase (AdT) complex, composed of A, B and C subunits.

It localises to the mitochondrion. It catalyses the reaction L-glutamyl-tRNA(Gln) + L-glutamine + ATP + H2O = L-glutaminyl-tRNA(Gln) + L-glutamate + ADP + phosphate + H(+). In terms of biological role, allows the formation of correctly charged Gln-tRNA(Gln) through the transamidation of misacylated Glu-tRNA(Gln) in the mitochondria. The reaction takes place in the presence of glutamine and ATP through an activated gamma-phospho-Glu-tRNA(Gln). This Dictyostelium discoideum (Social amoeba) protein is Glutamyl-tRNA(Gln) amidotransferase subunit A, mitochondrial.